The following is a 445-amino-acid chain: Proton extrusion protein PxcA (445 aa).

4 helical membrane passes run 227–247, 322–342, 369–389, and 405–425; these read FILLLIIVPLLTQQLTKTFLI, AIANIFADICSLIAFGFVVAF, LIILFTDIFVGFHSPHGWEVI, and FNFLFIATFPVILDTVLKYWI.

The protein belongs to the CemA family.

The protein resides in the cell inner membrane. In terms of biological role, required for H(+) efflux immediately after light irradiation to form a rapid H(+) concentration gradient across the thylakoid membranes. Together with PxcL, contributes to transient H(+) uptake following dark to light transition. The protein is Proton extrusion protein PxcA of Microcystis aeruginosa (strain NIES-843 / IAM M-2473).